Reading from the N-terminus, the 86-residue chain is Sec-independent protein translocase protein TatA (86 aa).

A helical membrane pass occupies residues 1 to 21; it reads MGGISIWQLLIIAVIVVLLFG. A disordered region spans residues 42 to 86; it reads AIGDDNQPQQAQKTSSDADFETKNITEKQSVAQSETSESKNKEQV. 2 stretches are compositionally biased toward polar residues: residues 47–58 and 68–77; these read NQPQQAQKTSSD and EKQSVAQSET.

It belongs to the TatA/E family. As to quaternary structure, the Tat system comprises two distinct complexes: a TatABC complex, containing multiple copies of TatA, TatB and TatC subunits, and a separate TatA complex, containing only TatA subunits. Substrates initially bind to the TatABC complex, which probably triggers association of the separate TatA complex to form the active translocon.

The protein resides in the cell inner membrane. Part of the twin-arginine translocation (Tat) system that transports large folded proteins containing a characteristic twin-arginine motif in their signal peptide across membranes. TatA could form the protein-conducting channel of the Tat system. The polypeptide is Sec-independent protein translocase protein TatA (Photorhabdus laumondii subsp. laumondii (strain DSM 15139 / CIP 105565 / TT01) (Photorhabdus luminescens subsp. laumondii)).